The sequence spans 442 residues: Meiotically up-regulated gene 191 protein (442 aa).

Thr-361 is subject to Phosphothreonine. A compositionally biased stretch (polar residues) spans 416-429; sequence RNNPSSGESTTLPQ. The interval 416–442 is disordered; it reads RNNPSSGESTTLPQPSHGKKDKDCVIS. Basic and acidic residues predominate over residues 433-442; that stretch reads GKKDKDCVIS.

It is found in the cytoplasm. The protein localises to the nucleus. In terms of biological role, has a role in meiosis. This Schizosaccharomyces pombe (strain 972 / ATCC 24843) (Fission yeast) protein is Meiotically up-regulated gene 191 protein (mug191).